Consider the following 623-residue polypeptide: Hemagglutinin component HA-70 type D (623 aa).

Botulinum toxins are produced as large progenitor toxins of 12S (M toxin, about 280 kDa) and 16S (L toxin, about 650 kDa). M toxin consists of a non-toxic, non-hemagglutinin component (NTNHA) and the neurotoxin (BoNT/D). L toxin consists of the M toxin and the 3 hemagglutinin (HA) subcomponents of 70, 33, and 17 kDa. The stoichiometry of the whole complex has been modeled as one BoNT/D, one NTNHA, three HA-70, six HA-33 and three HA-17. HA-33 and HA-17 crystallize as a heterotrimer with two HA-33 and one HA-17. Post-translationally, limited treatment of L toxin with pepsin or trypsin produces shorter HA-70 proteins (called HA-55, HA-23 and HA-22) sometimes observed in vivo in other strains of type C and D botulinum toxin preparations.

Its subcellular location is the secreted. The hemagglutinin (HA) component of the progenitor toxin protects the structural integrity of the neurotoxin; may increase internalization of the neurotoxin into the bloodstream of the host. Involved in binding to the small intestine through interactions with glycolipids and glycoproteins containing sialic acid moieties. Erythrocyte agglutination only occurs when the entire complex is assembled. This HA subunit probably connects toxin/NTNHA to HA-33 and HA-17, the other components of the HA complex, and it may also protect the M toxin from proteolysis upon secretion. This Clostridium botulinum D phage (Clostridium botulinum D bacteriophage) protein is Hemagglutinin component HA-70 type D.